We begin with the raw amino-acid sequence, 195 residues long: HTH-type transcriptional regulator BetI (195 aa).

In terms of domain architecture, HTH tetR-type spans 8-68; the sequence is SIRRRQLIDA…ATMRDITSQL (61 aa). The segment at residues 31 to 50 is a DNA-binding region (H-T-H motif); that stretch reads TIAQIARRAGVSTGIISHYF.

The protein operates within amine and polyamine biosynthesis; betaine biosynthesis via choline pathway [regulation]. Functionally, repressor involved in the biosynthesis of the osmoprotectant glycine betaine. It represses transcription of the choline transporter BetT and the genes of BetAB involved in the synthesis of glycine betaine. This is HTH-type transcriptional regulator BetI from Escherichia coli (strain K12 / DH10B).